The primary structure comprises 89 residues: Small ribosomal subunit protein uS15 (89 aa).

It belongs to the universal ribosomal protein uS15 family. Part of the 30S ribosomal subunit. Forms a bridge to the 50S subunit in the 70S ribosome, contacting the 23S rRNA.

Its function is as follows. One of the primary rRNA binding proteins, it binds directly to 16S rRNA where it helps nucleate assembly of the platform of the 30S subunit by binding and bridging several RNA helices of the 16S rRNA. Functionally, forms an intersubunit bridge (bridge B4) with the 23S rRNA of the 50S subunit in the ribosome. The sequence is that of Small ribosomal subunit protein uS15 from Phocaeicola vulgatus (strain ATCC 8482 / DSM 1447 / JCM 5826 / CCUG 4940 / NBRC 14291 / NCTC 11154) (Bacteroides vulgatus).